Reading from the N-terminus, the 249-residue chain is Glutathione S-transferase tcpG (249 aa).

A GST N-terminal domain is found at 20 to 109; that stretch reads LYVRKAIPAP…YLCDKHDKDG (90 aa). Residues 115-249 enclose the GST C-terminal domain; it reads NATERAQVTS…TEEEIELHGR (135 aa).

Belongs to the GST superfamily.

It catalyses the reaction RX + glutathione = an S-substituted glutathione + a halide anion + H(+). It participates in secondary metabolite biosynthesis. In terms of biological role, glutathione S-transferase; part of the gene cluster that mediates the biosynthesis of an unusual class of epipolythiodioxopiperazines (ETPs) lacking the reactive thiol group important for toxicity. Firstly, L-tyrosine is prenylated by tcpD, before undergoing condensation with L-glycine in a reaction catalyzed by the NRPS tcpP leading to the diketopiperazine (DKP) backbone. Afterwards the alpha-carbon of tyrosine is oxidized by the cytochrome P450 tcpC to form a hydroxyl group. However, in contrast other ETP biosynthesis pathways studied so far, tcpC is not able to bishydroxylate the DKP at both alpha-carbon positions, but hydroxylates the alpha-carbon of the tyrosine part and the nitrogen of the glycine part. The next steps involve an alpha,beta-elimination reaction catalyzed by tcpI, a methylation by the methyltransferase tcpN the action of the four enzyme cascade tcpG/K/J/I. Due to a dysfunctional cytochrome P450 monooxygenase tcpC, the pathway leads to the biosynthesis of probable non-toxic metabolites lacking the reactive thiol group. The chain is Glutathione S-transferase tcpG from Claviceps purpurea (strain 20.1) (Ergot fungus).